The following is a 1032-amino-acid chain: Exportin-T (1032 aa).

It belongs to the exportin family.

Its subcellular location is the nucleus. It is found in the cytoplasm. In terms of biological role, tRNA nucleus export receptor which facilitates tRNA translocation across the nuclear pore complex. Involved in pre-tRNA splicing, probably by affecting the interaction of pre-tRNA with splicing endonuclease. In Aspergillus fumigatus (strain CBS 144.89 / FGSC A1163 / CEA10) (Neosartorya fumigata), this protein is Exportin-T (los1).